Consider the following 187-residue polypeptide: UPF0301 protein LPC_2717 (187 aa).

The protein belongs to the UPF0301 (AlgH) family.

In Legionella pneumophila (strain Corby), this protein is UPF0301 protein LPC_2717.